The sequence spans 5635 residues: Hemicentin-1 (5635 aa).

The N-terminal stretch at Met-1–Ala-21 is a signal peptide. The 176-residue stretch at Thr-41–Val-216 folds into the VWFA domain. Residues Asn-349 and Asn-390 are each glycosylated (N-linked (GlcNAc...) asparagine). 44 consecutive Ig-like C2-type domains span residues Pro-431–Ser-517, Pro-520–Thr-607, Pro-612–Arg-697, Pro-702–Asp-788, Pro-793–Thr-883, Pro-890–Val-976, Pro-981–Thr-1067, Pro-1072–Asn-1166, Pro-1171–Thr-1255, Pro-1262–Lys-1354, Pro-1358–Asp-1447, Pro-1452–Thr-1541, Pro-1546–Asp-1634, Pro-1638–Lys-1724, Pro-1733–Thr-1821, Pro-1826–His-1914, Pro-1919–Gln-2007, Pro-2012–Asp-2097, Pro-2104–Asn-2190, Pro-2195–Gln-2285, Pro-2290–Ser-2379, Pro-2384–Phe-2470, Pro-2478–Ser-2564, Pro-2571–Lys-2662, Pro-2666–Gln-2763, Pro-2766–Arg-2864, Pro-2868–Asn-2959, Pro-2964–Thr-3051, Pro-3056–Asn-3146, Pro-3151–Ser-3240, Pro-3245–Asn-3335, Pro-3340–Gln-3429, Pro-3434–Ser-3516, Pro-3527–Arg-3615, Pro-3620–Thr-3708, Pro-3713–Asp-3797, Pro-3804–Thr-3892, Pro-3897–His-3983, Pro-3988–Gln-4076, Pro-4079–Thr-4164, Pro-4169–Thr-4255, Pro-4260–Tyr-4344, Pro-4348–Thr-4435, and Pro-4440–Gln-4527. Cys-451 and Cys-499 are oxidised to a cystine. N-linked (GlcNAc...) asparagine glycans are attached at residues Asn-528, Asn-550, Asn-573, and Asn-620. Cys-541 and Cys-591 are disulfide-bonded. Cys-633 and Cys-681 form a disulfide bridge. Asn-693 is a glycosylation site (N-linked (GlcNAc...) asparagine). A disulfide bridge connects residues Cys-723 and Cys-772. N-linked (GlcNAc...) asparagine glycosylation occurs at Asn-809. Intrachain disulfides connect Cys-814–Cys-867 and Cys-911–Cys-960. Asn-970 carries an N-linked (GlcNAc...) asparagine glycan. Cystine bridges form between Cys-1002/Cys-1051 and Cys-1101/Cys-1150. The N-linked (GlcNAc...) asparagine glycan is linked to Asn-1158. Cys-1192 and Cys-1241 are disulfide-bonded. Asn-1272 is a glycosylation site (N-linked (GlcNAc...) asparagine). Cysteines 1288 and 1338 form a disulfide. N-linked (GlcNAc...) asparagine glycosylation is present at Asn-1369. Disulfide bonds link Cys-1382–Cys-1431 and Cys-1475–Cys-1525. Asn-1552 carries an N-linked (GlcNAc...) asparagine glycan. Disulfide bonds link Cys-1569-Cys-1618, Cys-1663-Cys-1712, Cys-1756-Cys-1805, and Cys-1848-Cys-1898. Asn-1929 carries N-linked (GlcNAc...) asparagine glycosylation. Cystine bridges form between Cys-1942–Cys-1991 and Cys-2033–Cys-2083. Asn-2112 and Asn-2155 each carry an N-linked (GlcNAc...) asparagine glycan. 3 cysteine pairs are disulfide-bonded: Cys-2125–Cys-2174, Cys-2218–Cys-2269, and Cys-2314–Cys-2363. Asn-2395 carries N-linked (GlcNAc...) asparagine glycosylation. Intrachain disulfides connect Cys-2408–Cys-2457, Cys-2501–Cys-2550, and Cys-2597–Cys-2646. N-linked (GlcNAc...) asparagine glycosylation is present at Asn-2689. 2 disulfides stabilise this stretch: Cys-2696–Cys-2745 and Cys-2799–Cys-2848. A glycan (N-linked (GlcNAc...) asparagine) is linked at Asn-2887. Cysteines 2894 and 2943 form a disulfide. Residue Asn-2973 is glycosylated (N-linked (GlcNAc...) asparagine). Disulfide bonds link Cys-2986-Cys-3035, Cys-3081-Cys-3130, Cys-3173-Cys-3224, Cys-3268-Cys-3319, Cys-3364-Cys-3413, and Cys-3457-Cys-3506. 2 N-linked (GlcNAc...) asparagine glycosylation sites follow: Asn-3221 and Asn-3300. Asn-3530 is a glycosylation site (N-linked (GlcNAc...) asparagine). 2 disulfides stabilise this stretch: Cys-3550–Cys-3599 and Cys-3643–Cys-3692. Residues Asn-3689 and Asn-3727 are each glycosylated (N-linked (GlcNAc...) asparagine). An intrachain disulfide couples Cys-3734 to Cys-3783. N-linked (GlcNAc...) asparagine glycosylation is present at Asn-3812. Cystine bridges form between Cys-3825-Cys-3876, Cys-3918-Cys-3967, Cys-4009-Cys-4058, Cys-4100-Cys-4148, Cys-4190-Cys-4239, Cys-4281-Cys-4328, Cys-4371-Cys-4419, Cys-4461-Cys-4509, Cys-4541-Cys-4578, Cys-4545-Cys-4583, Cys-4556-Cys-4568, Cys-4598-Cys-4635, Cys-4602-Cys-4640, Cys-4613-Cys-4625, Cys-4655-Cys-4692, Cys-4659-Cys-4697, Cys-4670-Cys-4682, Cys-4712-Cys-4749, Cys-4716-Cys-4754, Cys-4727-Cys-4739, Cys-4769-Cys-4806, Cys-4773-Cys-4811, Cys-4784-Cys-4796, Cys-4826-Cys-4863, Cys-4830-Cys-4868, and Cys-4841-Cys-4853. Residue Asn-4029 is glycosylated (N-linked (GlcNAc...) asparagine). Asn-4401 and Asn-4491 each carry an N-linked (GlcNAc...) asparagine glycan. TSP type-1 domains lie at His-4529–Pro-4584, Asp-4586–Pro-4641, His-4643–Pro-4698, His-4700–Pro-4755, His-4757–Pro-4812, and Asp-4814–Pro-4869. A glycan (N-linked (GlcNAc...) asparagine) is linked at Asn-4606. The region spanning Gly-4871–Pro-5093 is the Nidogen G2 beta-barrel domain. Residues Asn-4894 and Asn-5040 are each glycosylated (N-linked (GlcNAc...) asparagine). Residues Asp-5107–Gln-5146 form the EGF-like 1; calcium-binding domain. 3 disulfides stabilise this stretch: Cys-5111–Cys-5121, Cys-5117–Cys-5130, and Cys-5132–Cys-5145. An EGF-like 2; calcium-binding domain is found at Asp-5147 to Gln-5191. Residues Asp-5192 to Met-5229 form the EGF-like 3; calcium-binding domain. Intrachain disulfides connect Cys-5196-Cys-5206, Cys-5202-Cys-5215, and Cys-5217-Cys-5228. An EGF-like 4; calcium-binding domain is found at Asp-5230–Ile-5271. Residue Asn-5267 is glycosylated (N-linked (GlcNAc...) asparagine). The EGF-like 5; calcium-binding domain occupies Asp-5272–Gln-5307. Cystine bridges form between Cys-5276–Cys-5289, Cys-5283–Cys-5298, Cys-5319–Cys-5330, Cys-5326–Cys-5339, Cys-5341–Cys-5354, Cys-5436–Cys-5446, Cys-5442–Cys-5455, and Cys-5457–Cys-5470. Residues Asp-5315–Ala-5355 form the EGF-like 6; calcium-binding domain. Residues Asp-5432–Gln-5471 form the EGF-like 7; calcium-binding domain. Residue Asn-5615 is glycosylated (N-linked (GlcNAc...) asparagine).

In terms of tissue distribution, expressed in hair follicles and in the dermis (at protein level). As to expression, expressed in skin fibroblasts and retinal pigment epithelium (RPE) cells.

It is found in the secreted. Its subcellular location is the extracellular space. The protein resides in the extracellular matrix. The protein localises to the basement membrane. It localises to the cytoplasm. It is found in the cell junction. Its subcellular location is the cleavage furrow. Functionally, involved in transforming growth factor beta-mediated rearrangement of the podocyte cytoskeleton which includes reduction of F-actin fibers and broadening, flattening and elongation of podocytes. Plays a role in basement membrane organization. May promote cleavage furrow maturation during cytokinesis in preimplantation embryos. May play a role in the architecture of adhesive and flexible epithelial cell junctions. May play a role during myocardial remodeling by imparting an effect on cardiac fibroblast migration. The polypeptide is Hemicentin-1 (HMCN1) (Homo sapiens (Human)).